The sequence spans 436 residues: Xylose isomerase (436 aa).

Residues histidine 100 and aspartate 103 contribute to the active site. Mg(2+) is bound by residues glutamate 231, glutamate 267, histidine 270, aspartate 295, aspartate 306, aspartate 308, and aspartate 338.

The protein belongs to the xylose isomerase family. In terms of assembly, homotetramer. Requires Mg(2+) as cofactor.

The protein resides in the cytoplasm. It carries out the reaction alpha-D-xylose = alpha-D-xylulofuranose. This Ruegeria sp. (strain TM1040) (Silicibacter sp.) protein is Xylose isomerase.